Here is a 440-residue protein sequence, read N- to C-terminus: Chromosome partition protein MukF (440 aa).

Positions 208–236 (LSETSGTLRELQDTLEAAGDKLQANLLRI) are leucine-zipper.

Belongs to the MukF family. As to quaternary structure, interacts, and probably forms a ternary complex, with MukE and MukB via its C-terminal region. The complex formation is stimulated by calcium or magnesium. It is required for an interaction between MukE and MukB.

The protein localises to the cytoplasm. It localises to the nucleoid. Functionally, involved in chromosome condensation, segregation and cell cycle progression. May participate in facilitating chromosome segregation by condensation DNA from both sides of a centrally located replisome during cell division. Not required for mini-F plasmid partitioning. Probably acts via its interaction with MukB and MukE. Overexpression results in anucleate cells. It has a calcium binding activity. This chain is Chromosome partition protein MukF, found in Edwardsiella ictaluri (strain 93-146).